A 798-amino-acid polypeptide reads, in one-letter code: General transcription and DNA repair factor IIH helicase/translocase subunit XPB (798 aa).

2 disordered regions span residues 1-62 (MGPP…EQIN) and 235-254 (PPGATDKPTPDPAAAAGADG). The Nuclear localization signal motif lies at 6 to 22 (KSRKDRSGGDKFGKKRR). The span at 10 to 25 (DRSGGDKFGKKRRAED) shows a compositional bias: basic and acidic residues. A compositionally biased stretch (acidic residues) spans 33–42 (DDNDSLDATE). In terms of domain architecture, Helicase ATP-binding spans 343–504 (MFGNGRARSG…DLNFLIGPKL (162 aa)). ATP is bound at residue 360–367 (AGKSLVGV). Residues 457-460 (DEVH) carry the DEVH box motif. In terms of domain architecture, Helicase C-terminal spans 558–713 (RSCQFLIKYH…KVITHLKGMD (156 aa)). The tract at residues 746-765 (LPGEPGYRPSGSGGAVRRVG) is disordered.

This sequence belongs to the helicase family. RAD25/XPB subfamily. As to quaternary structure, component of the 7-subunit TFIIH core complex composed of haywire/XPB/ERCC3, XPD/ERCC2, GTF2H1, GTF2H2, GTF2H3, GTF2H4 and GTF2H5, which is active in NER. The core complex associates with the 3-subunit CDK-activating kinase (CAK) module composed of CCNH/cyclin H, CDK7 and MNAT1 to form the 10-subunit holoenzyme (holo-TFIIH) active in transcription. Interacts with PUF60. Interacts with ATF7IP. Interacts with Epstein-Barr virus EBNA2.

The protein localises to the nucleus. The enzyme catalyses Couples ATP hydrolysis with the unwinding of duplex DNA by translocating in the 3'-5' direction.. It catalyses the reaction ATP + H2O = ADP + phosphate + H(+). In terms of biological role, ATP-dependent 3'-5' DNA helicase/translocase; binds dsDNA rather than ssDNA, unzipping it in a translocase rather than classical helicase activity. Component of the general transcription and DNA repair factor IIH (TFIIH) core complex. When complexed to CDK-activating kinase (CAK), involved in RNA transcription by RNA polymerase II. The ATPase activity of XPB/ERCC3, but not its helicase activity, is required for DNA opening; it may wrap around the damaged DNA wedging it open, causing localized melting and twisting that allows XPD/ERCC2 helicase to anchor. The ATP-dependent helicase activity of XPB/ERCC3 may be required for promoter escape. Also involved in transcription-coupled nucleotide excision repair (NER) of damaged DNA. In NER, TFIIH acts by opening DNA around the lesion to allow the excision of the damaged oligonucleotide and its replacement by a new DNA fragment. The structure of the TFIIH transcription complex differs from the NER-TFIIH complex; large movements by XPD/ERCC2 and XPB/ERCC3 are stabilized by XPA. This Drosophila melanogaster (Fruit fly) protein is General transcription and DNA repair factor IIH helicase/translocase subunit XPB (hay).